The chain runs to 352 residues: Probable dual-specificity RNA methyltransferase RlmN (352 aa).

The active-site Proton acceptor is Glu-93. One can recognise a Radical SAM core domain in the interval 99–332; the sequence is TAKRLTVCVS…ATVRQTRGLD (234 aa). A disulfide bridge connects residues Cys-106 and Cys-337. Residues Cys-113, Cys-117, and Cys-120 each coordinate [4Fe-4S] cluster. S-adenosyl-L-methionine is bound by residues 160 to 161, Ser-190, 213 to 215, and Asn-294; these read GE and SLH. Cys-337 serves as the catalytic S-methylcysteine intermediate.

The protein belongs to the radical SAM superfamily. RlmN family. The cofactor is [4Fe-4S] cluster.

Its subcellular location is the cytoplasm. The enzyme catalyses adenosine(2503) in 23S rRNA + 2 reduced [2Fe-2S]-[ferredoxin] + 2 S-adenosyl-L-methionine = 2-methyladenosine(2503) in 23S rRNA + 5'-deoxyadenosine + L-methionine + 2 oxidized [2Fe-2S]-[ferredoxin] + S-adenosyl-L-homocysteine. It carries out the reaction adenosine(37) in tRNA + 2 reduced [2Fe-2S]-[ferredoxin] + 2 S-adenosyl-L-methionine = 2-methyladenosine(37) in tRNA + 5'-deoxyadenosine + L-methionine + 2 oxidized [2Fe-2S]-[ferredoxin] + S-adenosyl-L-homocysteine. Functionally, specifically methylates position 2 of adenine 2503 in 23S rRNA and position 2 of adenine 37 in tRNAs. This Synechococcus sp. (strain JA-2-3B'a(2-13)) (Cyanobacteria bacterium Yellowstone B-Prime) protein is Probable dual-specificity RNA methyltransferase RlmN.